A 407-amino-acid chain; its full sequence is Flagellar calcium-binding protein TB-44A (407 aa).

The segment at 1-27 is disordered; it reads MGCSASKDTTNSKDGAASKGGKDGKTT. The interval 25–399 is 2 X 186 AA almost perfect repeats; the sequence is KTTADRKVAW…LQVCGDPDGE (375 aa). The EF-hand 1 domain occupies 48–83; sequence ESKSRRIELFKRFDTNGTGKLSFREVLDGCYSILKL. Asp-61, Asn-63, Thr-65, Lys-67, and Glu-72 together coordinate Ca(2+). The ancestral calcium site 2 stretch occupies residues 110 to 121; the sequence is GVGEEDLVEFLE. EF-hand domains are found at residues 130–165, 167–202, and 237–272; these read YDIF…WKEW, VDIT…KKLQ, and ESKS…ILKL. Asp-143, Asp-145, Ser-147, Glu-154, Asp-180, Asn-182, Ser-184, Glu-191, Asp-250, Asn-252, Thr-254, Lys-256, and Glu-261 together coordinate Ca(2+). Residues 299-310 are ancestral calcium site 6; that stretch reads GVGEEDLVEFLE. 2 EF-hand domains span residues 319 to 354 and 356 to 391; these read YDIF…WKEW and VDIT…KKLQ. Positions 332, 334, 336, 343, 369, 371, 373, and 380 each coordinate Ca(2+).

This sequence belongs to the calflagin family.

The protein resides in the cell projection. The protein localises to the cilium. It localises to the flagellum. Its function is as follows. May contribute to the rapid motility of the trypanosomes, playing a role either in flagellar structure or in calcium metabolism. Could alternate between a GDP-bound inactive form to a calcium/GTP-bound active form. This chain is Flagellar calcium-binding protein TB-44A, found in Trypanosoma brucei brucei.